The chain runs to 179 residues: Ribosome maturation factor RimM (179 aa).

The region spanning 101–179 is the PRC barrel domain; sequence EGEVYVHDLC…VELMHRWILE (79 aa).

This sequence belongs to the RimM family. In terms of assembly, binds ribosomal protein uS19.

The protein resides in the cytoplasm. An accessory protein needed during the final step in the assembly of 30S ribosomal subunit, possibly for assembly of the head region. Essential for efficient processing of 16S rRNA. May be needed both before and after RbfA during the maturation of 16S rRNA. It has affinity for free ribosomal 30S subunits but not for 70S ribosomes. This Treponema denticola (strain ATCC 35405 / DSM 14222 / CIP 103919 / JCM 8153 / KCTC 15104) protein is Ribosome maturation factor RimM.